The following is a 204-amino-acid chain: Inactive ribonuclease-like protein 9 (204 aa).

The N-terminal stretch at 1 to 26 (MMRTLITIHPLPLLLLLQQLLQPVQF) is a signal peptide. 3 disulfides stabilise this stretch: C97–C152, C115–C167, and C122–C129. 2 N-linked (GlcNAc...) asparagine glycosylation sites follow: N130 and N142.

This sequence belongs to the pancreatic ribonuclease family.

The protein resides in the secreted. Its function is as follows. Does not exhibit any ribonuclease activity. This Pongo pygmaeus (Bornean orangutan) protein is Inactive ribonuclease-like protein 9 (RNASE9).